A 61-amino-acid chain; its full sequence is MDPNCSCSTGGSCSCATSCTCKACRCTSCKKSCCSCCPAGCAKCAQGCICKGASDKCSCCA.

Residues 1–29 (MDPNCSCSTGGSCSCATSCTCKACRCTSC) form a beta region. 20 residues coordinate a divalent metal cation: Cys-5, Cys-7, Cys-13, Cys-15, Cys-19, Cys-21, Cys-24, Cys-26, Cys-29, Cys-33, Cys-34, Cys-36, Cys-37, Cys-41, Cys-44, Cys-48, Cys-50, Cys-57, Cys-59, and Cys-60. The interval 30-61 (KKSCCSCCPAGCAKCAQGCICKGASDKCSCCA) is alpha.

It belongs to the metallothionein superfamily. Type 1 family. In terms of assembly, monomer.

Metallothioneins have a high content of cysteine residues that bind various heavy metals; these proteins are transcriptionally regulated by both heavy metals and glucocorticoids. This Sus scrofa (Pig) protein is Metallothionein-1D (MT1D).